We begin with the raw amino-acid sequence, 234 residues long: Glucosamine-6-phosphate deaminase (234 aa).

Aspartate 62 (proton acceptor; for enolization step) is an active-site residue. Catalysis depends on asparagine 128, which acts as the For ring-opening step. Catalysis depends on histidine 130, which acts as the Proton acceptor; for ring-opening step. Residue glutamate 135 is the For ring-opening step of the active site.

This sequence belongs to the glucosamine/galactosamine-6-phosphate isomerase family. NagB subfamily.

The enzyme catalyses alpha-D-glucosamine 6-phosphate + H2O = beta-D-fructose 6-phosphate + NH4(+). It functions in the pathway amino-sugar metabolism; N-acetylneuraminate degradation; D-fructose 6-phosphate from N-acetylneuraminate: step 5/5. Catalyzes the reversible isomerization-deamination of glucosamine 6-phosphate (GlcN6P) to form fructose 6-phosphate (Fru6P) and ammonium ion. The sequence is that of Glucosamine-6-phosphate deaminase from Streptococcus uberis (strain ATCC BAA-854 / 0140J).